A 129-amino-acid polypeptide reads, in one-letter code: Succinate dehydrogenase assembly factor 3, mitochondrial (129 aa).

Residues 1-21 (MQVNHLLRQAVKQTTRAGRLG) constitute a mitochondrion transit peptide.

This sequence belongs to the complex I LYR family. SDHAF3 subfamily. Interacts with the iron-sulfur protein subunit within the SDH catalytic dimer.

It localises to the mitochondrion matrix. Its function is as follows. Plays an essential role in the assembly of succinate dehydrogenase (SDH), an enzyme complex (also referred to as respiratory complex II) that is a component of both the tricarboxylic acid (TCA) cycle and the mitochondrial electron transport chain, and which couples the oxidation of succinate to fumarate with the reduction of ubiquinone (coenzyme Q) to ubiquinol. Promotes maturation of the iron-sulfur protein subunit of the SDH catalytic dimer, protecting it from the deleterious effects of oxidants. May act together with SDHAF1. The chain is Succinate dehydrogenase assembly factor 3, mitochondrial from Kluyveromyces lactis (strain ATCC 8585 / CBS 2359 / DSM 70799 / NBRC 1267 / NRRL Y-1140 / WM37) (Yeast).